The following is a 660-amino-acid chain: tRNA 5-methylaminomethyl-2-thiouridine biosynthesis bifunctional protein MnmC (660 aa).

The interval 1 to 242 (MTDRIVPATL…KRAMLVGEFA (242 aa)) is tRNA (mnm(5)s(2)U34)-methyltransferase. Positions 266–660 (IGAGLAGCAV…VRALRHGRVA (395 aa)) are FAD-dependent cmnm(5)s(2)U34 oxidoreductase.

It in the N-terminal section; belongs to the methyltransferase superfamily. tRNA (mnm(5)s(2)U34)-methyltransferase family. This sequence in the C-terminal section; belongs to the DAO family. The cofactor is FAD.

The protein localises to the cytoplasm. The catalysed reaction is 5-aminomethyl-2-thiouridine(34) in tRNA + S-adenosyl-L-methionine = 5-methylaminomethyl-2-thiouridine(34) in tRNA + S-adenosyl-L-homocysteine + H(+). In terms of biological role, catalyzes the last two steps in the biosynthesis of 5-methylaminomethyl-2-thiouridine (mnm(5)s(2)U) at the wobble position (U34) in tRNA. Catalyzes the FAD-dependent demodification of cmnm(5)s(2)U34 to nm(5)s(2)U34, followed by the transfer of a methyl group from S-adenosyl-L-methionine to nm(5)s(2)U34, to form mnm(5)s(2)U34. In Burkholderia pseudomallei (strain 1106a), this protein is tRNA 5-methylaminomethyl-2-thiouridine biosynthesis bifunctional protein MnmC.